We begin with the raw amino-acid sequence, 256 residues long: F-actin-capping protein subunit alpha (256 aa).

Ser-31 carries the post-translational modification Phosphoserine.

The protein belongs to the F-actin-capping protein alpha subunit family. Component of the F-actin capping complex, composed of a heterodimer of an alpha and a beta subunit.

The protein resides in the cytoplasm. It is found in the cytoskeleton. It localises to the actin patch. Its function is as follows. F-actin-capping proteins bind in a Ca(2+)-independent manner to the fast growing ends of actin filaments (barbed end) thereby blocking the exchange of subunits at these ends. Unlike other capping proteins (such as gelsolin and severin), these proteins do not sever actin filaments. Competes with formin cdc12 for attachment to the actin filaments barbed ends. Slowly replaces cdc12 on the barbed ends in preparation for filament disassembly during contractile ring constriction. This chain is F-actin-capping protein subunit alpha (acp1), found in Schizosaccharomyces pombe (strain 972 / ATCC 24843) (Fission yeast).